A 377-amino-acid polypeptide reads, in one-letter code: uncharacterized protein (377 aa).

5 disordered regions span residues 10–79, 91–141, 182–257, 265–284, and 289–326; these read YSDG…NVNN, KKNN…DKEE, EAKK…TTTT, ENENQEKENNDNDNDNEPIE, and LEFNKFEEKPIKEVKVNTASSNKRNKKRNNPKKVKEEP. Low complexity-rich tracts occupy residues 14–24, 46–79, and 93–124; these read IPQPTITPPTQ, NKNNRNNKNNVDNNNNNNNNNNNNEKQNQTNVNN, and NNNNNNNNNNNNNNNNNNNNNNKNKYNKFNDN. Composition is skewed to basic and acidic residues over residues 182 to 196 and 209 to 218; these read EAKKKEEEDARKRGE and QTPDKKKKLE. A compositionally biased stretch (low complexity) spans 221-257; that stretch reads TSKNNNKSSTTKTELTNTTTNTSSTTNPTTDTTTTTT. Composition is skewed to basic and acidic residues over residues 265–274 and 292–303; these read ENENQEKENN and NKFEEKPIKEVK. Over residues 311 to 320 the composition is skewed to basic residues; sequence KRNKKRNNPK.

This is an uncharacterized protein from Dictyostelium discoideum (Social amoeba).